The following is a 170-amino-acid chain: Cathelicidin antimicrobial peptide (170 aa).

Positions 1–30 (MNTQWDSPSLGRWSLVLLLLGLVMPLAIVA) are cleaved as a signal peptide. Positions 31 to 131 (QVLSYQEAVL…DISCDKDKRK (101 aa)) are cleaved as a propeptide — cathelin-like domain (CLD). Intrachain disulfides connect Cys-86/Cys-97 and Cys-108/Cys-125. The interval 150–162 (LKNIGQRIKDFFG) is active core.

This sequence belongs to the cathelicidin family. In terms of assembly, monomer, homodimer or homotrimer (in vitro). Oligomerizes as tetra- or hexamer in solution (in vitro). Post-translationally, proteolytically cleaved by proteinase PRTN3 into antibacterial peptide LL-37. Proteolytically cleaved by cathepsin CTSG and neutrophil elastase ELANE. Resistant to proteolytic degradation in solution, and when bound to both zwitterionic (mimicking mammalian membranes) and negatively charged membranes (mimicking bacterial membranes). In terms of processing, after secretion onto the skin surface, the CAMP gene product is processed by a serine protease-dependent mechanism into multiple novel antimicrobial peptides distinct from and shorter than cathelicidin LL-37. These peptides show enhanced antimicrobial action, acquiring the ability to kill skin pathogens such as S.aureus, E.coli and C.albicans. These peptides have lost the ability to stimulate CXCL8/IL8 release from keratinocytes. The peptides act synergistically, killing bacteria at lower concentrations when present together, and maintain activity at increased salt condition.

It is found in the secreted. It localises to the vesicle. Antimicrobial protein that is an integral component of the innate immune system. Binds to bacterial lipopolysaccharides (LPS). Acts via neutrophil N-formyl peptide receptors to enhance the release of CXCL2. Postsecretory processing generates multiple cathelicidin antimicrobial peptides with various lengths which act as a topical antimicrobial defense in sweat on skin. The unprocessed precursor form, cathelicidin antimicrobial peptide, inhibits the growth of Gram-negative E.coli and E.aerogenes with efficiencies comparable to that of the mature peptide LL-37 (in vitro). Its function is as follows. Antimicrobial peptide that is an integral component of the innate immune system. Binds to bacterial lipopolysaccharides (LPS). Causes membrane permeabilization by forming transmembrane pores (in vitro). Causes lysis of E.coli. Exhibits antimicrobial activity against Gram-negative bacteria such as P.aeruginosa, S.typhimurium, E.aerogenes, E.coli and P.syringae, Gram-positive bacteria such as L.monocytogenes, S.epidermidis, S.pyogenes and S.aureus, as well as vancomycin-resistant enterococci (in vitro). Exhibits antimicrobial activity against methicillin-resistant S.aureus, P.mirabilis, and C.albicans in low-salt media, but not in media containing 100 mM NaCl (in vitro). Forms chiral supramolecular assemblies with quinolone signal (PQS) molecules of P.aeruginosa, which may lead to interference of bacterial quorum signaling and perturbance of bacterial biofilm formation. May form supramolecular fiber-like assemblies on bacterial membranes. Induces cytokine and chemokine producation as well as TNF/TNFA and CSF2/GMCSF production in normal human keratinocytes. Exhibits hemolytic activity against red blood cells. Functionally, exhibits antimicrobial activity against E.coli and B.megaterium (in vitro). The protein is Cathelicidin antimicrobial peptide of Ateles fusciceps (Brown-headed spider monkey).